The primary structure comprises 470 residues: Ribulose bisphosphate carboxylase large chain (470 aa).

The substrate site is built by N115 and T165. The active-site Proton acceptor is the K167. K169 is a substrate binding site. Residues K193, D195, and E196 each contribute to the Mg(2+) site. K193 bears the N6-carboxylysine mark. H286 serves as the catalytic Proton acceptor. Positions 287, 319, and 371 each coordinate substrate.

The protein belongs to the RuBisCO large chain family. Type I subfamily. Heterohexadecamer of 8 large chains and 8 small chains. Forms a CsoS2-CsoS1-RuBisCO complex. Requires Mg(2+) as cofactor.

It is found in the carboxysome. It catalyses the reaction 2 (2R)-3-phosphoglycerate + 2 H(+) = D-ribulose 1,5-bisphosphate + CO2 + H2O. It carries out the reaction D-ribulose 1,5-bisphosphate + O2 = 2-phosphoglycolate + (2R)-3-phosphoglycerate + 2 H(+). Its function is as follows. RuBisCO catalyzes two reactions: the carboxylation of D-ribulose 1,5-bisphosphate, the primary event in carbon dioxide fixation, as well as the oxidative fragmentation of the pentose substrate in the photorespiration process. Both reactions occur simultaneously and in competition at the same active site. The polypeptide is Ribulose bisphosphate carboxylase large chain (Prochlorococcus marinus (strain MIT 9313)).